Consider the following 233-residue polypeptide: Ion-translocating oxidoreductase complex subunit E (233 aa).

6 helical membrane-spanning segments follow: residues 18 to 38 (ALVQLLGLCPLLAVSSTATNA), 39 to 59 (LGLGLATTLVLVCTNTAVSAL), 69 to 89 (IPIYVMIIASVVSTVQMLINA), 92 to 112 (FGLYQSLGIFIPLIVTNCIVI), 128 to 148 (ALDGFAMGMGATCALFVLGAL), and 182 to 202 (PFLLAMLPPGAFIGLGLLLAG).

This sequence belongs to the NqrDE/RnfAE family. The complex is composed of six subunits: RnfA, RnfB, RnfC, RnfD, RnfE and RnfG.

The protein resides in the cell inner membrane. Its function is as follows. Part of a membrane-bound complex that couples electron transfer with translocation of ions across the membrane. This Yersinia pseudotuberculosis serotype IB (strain PB1/+) protein is Ion-translocating oxidoreductase complex subunit E.